The chain runs to 310 residues: Malate dehydrogenase (310 aa).

NAD(+)-binding positions include G7–G12 and D32. The substrate site is built by R81 and R87. NAD(+) is bound by residues N94 and V117–N119. Residues N119 and R150 each coordinate substrate. H174 functions as the Proton acceptor in the catalytic mechanism.

The protein belongs to the LDH/MDH superfamily. MDH type 3 family. In terms of assembly, homotetramer; arranged as a dimer of dimers.

It carries out the reaction (S)-malate + NAD(+) = oxaloacetate + NADH + H(+). Functionally, catalyzes the reversible oxidation of malate to oxaloacetate. The polypeptide is Malate dehydrogenase (Chlorobaculum tepidum (strain ATCC 49652 / DSM 12025 / NBRC 103806 / TLS) (Chlorobium tepidum)).